The sequence spans 544 residues: CTP synthase (544 aa).

Residues 1–265 form an amidoligase domain region; the sequence is MTKFIFVTGG…DNIITEQLQL (265 aa). Position 13 (serine 13) interacts with CTP. Serine 13 provides a ligand contact to UTP. ATP contacts are provided by residues 14-19 and aspartate 71; that span reads SLGKGI. Mg(2+) contacts are provided by aspartate 71 and glutamate 139. Residues 146 to 148, 186 to 191, and lysine 222 contribute to the CTP site; these read DIE and KTKPTQ. UTP-binding positions include 186–191 and lysine 222; that span reads KTKPTQ. The 255-residue stretch at 290–544 folds into the Glutamine amidotransferase type-1 domain; the sequence is KIAMVGKYVD…VKAALNNKKA (255 aa). Position 353 (glycine 353) interacts with L-glutamine. Residue cysteine 380 is the Nucleophile; for glutamine hydrolysis of the active site. Residues 381 to 384, glutamate 404, and arginine 471 each bind L-glutamine; that span reads LGMQ. Catalysis depends on residues histidine 517 and glutamate 519.

It belongs to the CTP synthase family. Homotetramer.

It carries out the reaction UTP + L-glutamine + ATP + H2O = CTP + L-glutamate + ADP + phosphate + 2 H(+). The enzyme catalyses L-glutamine + H2O = L-glutamate + NH4(+). It catalyses the reaction UTP + NH4(+) + ATP = CTP + ADP + phosphate + 2 H(+). It participates in pyrimidine metabolism; CTP biosynthesis via de novo pathway; CTP from UDP: step 2/2. Allosterically activated by GTP, when glutamine is the substrate; GTP has no effect on the reaction when ammonia is the substrate. The allosteric effector GTP functions by stabilizing the protein conformation that binds the tetrahedral intermediate(s) formed during glutamine hydrolysis. Inhibited by the product CTP, via allosteric rather than competitive inhibition. Catalyzes the ATP-dependent amination of UTP to CTP with either L-glutamine or ammonia as the source of nitrogen. Regulates intracellular CTP levels through interactions with the four ribonucleotide triphosphates. The protein is CTP synthase of Neisseria meningitidis serogroup A / serotype 4A (strain DSM 15465 / Z2491).